The sequence spans 197 residues: Imidazoleglycerol-phosphate dehydratase (197 aa).

The protein belongs to the imidazoleglycerol-phosphate dehydratase family.

Its subcellular location is the cytoplasm. It catalyses the reaction D-erythro-1-(imidazol-4-yl)glycerol 3-phosphate = 3-(imidazol-4-yl)-2-oxopropyl phosphate + H2O. Its pathway is amino-acid biosynthesis; L-histidine biosynthesis; L-histidine from 5-phospho-alpha-D-ribose 1-diphosphate: step 6/9. The sequence is that of Imidazoleglycerol-phosphate dehydratase from Leptospira biflexa serovar Patoc (strain Patoc 1 / Ames).